A 493-amino-acid chain; its full sequence is Tripartite motif-containing protein 5 (493 aa).

Ala2 is subject to N-acetylalanine. An RING-type zinc finger spans residues Cys15–Arg59. Ser86 carries the phosphoserine modification. The B box-type zinc-finger motif lies at Gln90 to Glu132. Zn(2+) contacts are provided by Cys95, His98, Cys117, and His123. Residues Thr131–Gln240 are a coiled coil. The tract at residues Phe185–Asn198 is required for interaction with GABARAP and for autophagy. Residues Leu281 to Ser493 form the B30.2/SPRY domain.

It belongs to the TRIM/RBCC family. Can form homodimers and homotrimers. In addition to lower-order dimerization, also exhibits a higher-order multimerization and both low- and high-order multimerizations are essential for its restriction activity. Interacts with BTBD1 and BTBD2. Interacts with PSMC4, PSMC5, PSMD7 and HSPA8/HSC70. Interacts (via B30.2/SPRY domain) with HSPA1A/B. Interacts with PSMC2, MAP3K7/TAK1, TAB2 and TAB3. Interacts with SQSTM1. Interacts with TRIM6 and TRIM34. Interacts with ULK1 (phosphorylated form), GABARAP, GABARAPL1, GABARAPL2, MAP1LC3A, MAP1LC3C and BECN1. Post-translationally, degraded in a proteasome-independent fashion in the absence of viral infection but in a proteasome-dependent fashion following exposure to restriction sensitive virus. In terms of processing, autoubiquitinated in a RING finger- and UBE2D2-dependent manner. Monoubiquitinated by TRIM21. Deubiquitinated by Yersinia YopJ. Ubiquitination may not lead to proteasomal degradation.

It localises to the cytoplasm. Its subcellular location is the nucleus. It carries out the reaction S-ubiquitinyl-[E2 ubiquitin-conjugating enzyme]-L-cysteine + [acceptor protein]-L-lysine = [E2 ubiquitin-conjugating enzyme]-L-cysteine + N(6)-ubiquitinyl-[acceptor protein]-L-lysine.. Its pathway is protein modification; protein ubiquitination. Capsid-specific restriction factor that prevents infection from non-host-adapted retroviruses. Blocks viral replication early in the life cycle, after viral entry but before reverse transcription. In addition to acting as a capsid-specific restriction factor, also acts as a pattern recognition receptor that activates innate immune signaling in response to the retroviral capsid lattice. Binding to the viral capsid triggers its E3 ubiquitin ligase activity, and in concert with the heterodimeric ubiquitin conjugating enzyme complex UBE2V1-UBE2N (also known as UBC13-UEV1A complex) generates 'Lys-63'-linked polyubiquitin chains, which in turn are catalysts in the autophosphorylation of the MAP3K7/TAK1 complex (includes TAK1, TAB2, and TAB3). Activation of the MAP3K7/TAK1 complex by autophosphorylation results in the induction and expression of NF-kappa-B and MAPK-responsive inflammatory genes, thereby leading to an innate immune response in the infected cell. Plays a role in regulating autophagy through activation of autophagy regulator BECN1 by causing its dissociation from its inhibitors BCL2 and TAB2. The polypeptide is Tripartite motif-containing protein 5 (TRIM5) (Pan paniscus (Pygmy chimpanzee)).